The chain runs to 292 residues: Acetyl-coenzyme A carboxylase carboxyl transferase subunit beta (292 aa).

One can recognise a CoA carboxyltransferase N-terminal domain in the interval 23–292 (VWSKCTACGN…TEATEVSVNE (270 aa)). C27, C30, C46, and C49 together coordinate Zn(2+). A C4-type zinc finger spans residues 27-49 (CTACGNIIYKADLERSLNVCPKC).

Belongs to the AccD/PCCB family. Acetyl-CoA carboxylase is a heterohexamer composed of biotin carboxyl carrier protein (AccB), biotin carboxylase (AccC) and two subunits each of ACCase subunit alpha (AccA) and ACCase subunit beta (AccD). Zn(2+) is required as a cofactor.

The protein resides in the cytoplasm. The catalysed reaction is N(6)-carboxybiotinyl-L-lysyl-[protein] + acetyl-CoA = N(6)-biotinyl-L-lysyl-[protein] + malonyl-CoA. Its pathway is lipid metabolism; malonyl-CoA biosynthesis; malonyl-CoA from acetyl-CoA: step 1/1. Component of the acetyl coenzyme A carboxylase (ACC) complex. Biotin carboxylase (BC) catalyzes the carboxylation of biotin on its carrier protein (BCCP) and then the CO(2) group is transferred by the transcarboxylase to acetyl-CoA to form malonyl-CoA. The chain is Acetyl-coenzyme A carboxylase carboxyl transferase subunit beta from Idiomarina loihiensis (strain ATCC BAA-735 / DSM 15497 / L2-TR).